We begin with the raw amino-acid sequence, 333 residues long: L-lactate dehydrogenase A chain (333 aa).

NAD(+) contacts are provided by residues 30–58 (GMVGMAAAISILLKDLTDELALVDVMEDK) and R100. R107, N139, and R170 together coordinate substrate. An NAD(+)-binding site is contributed by N139. Residue H194 is the Proton acceptor of the active site. T249 is a binding site for substrate.

This sequence belongs to the LDH/MDH superfamily. LDH family. As to quaternary structure, homotetramer.

It localises to the cytoplasm. It carries out the reaction (S)-lactate + NAD(+) = pyruvate + NADH + H(+). It participates in fermentation; pyruvate fermentation to lactate; (S)-lactate from pyruvate: step 1/1. In Cyprinus carpio (Common carp), this protein is L-lactate dehydrogenase A chain (ldha).